The primary structure comprises 652 residues: MAMDEYLWMVILGFIIAFILAFSVGANDVANSFGTAVGSGVVTLRQACILASIFETTGSVLLGAKVGETIRKGIIDVNLYNETVETLMAGEVSAMVGSAVWQLIASFLRLPISGTHCIVGSTIGFSLVAIGTKGVQWMELVKIVASWFISPLLSGFMSGLLFVLIRIFILKKEDPVPNGLRALPVFYAATIAINVFSIMYTGAPVLGLVLPMWAIALISFGVALLFAFFVWLFVCPWMRRKITGKLQKEGALSRVSDESLSKVQEAESPVFKELPGAKANDDSTIPLTGAAGETLGTSEGTSAGSHPRAAYGRALSMTHGSVKSPISNGTFGFDGHTRSDGHVYHTVHKDSGLYKDLLHKIHIDRGPEEKPAQESNYRLLRRNNSYTCYTAAICGLPVHATFRAADSSAPEDSEKLVGDTVSYSKKRLRYDSYSSYCNAVAEAEIEAEEGGVEMKLASELADPDQPREDPAEEEKEEKDAPEVHLLFHFLQVLTACFGSFAHGGNDVSNAIGPLVALWLIYKQGGVTQEAATPVWLLFYGGVGICTGLWVWGRRVIQTMGKDLTPITPSSGFTIELASAFTVVIASNIGLPVSTTHCKVGSVVAVGWIRSRKAVDWRLFRNIFVAWFVTVPVAGLFSAAVMALLMYGILPYV.

Residues 1-5 are Extracellular-facing; it reads MAMDE. Residues 6–26 form a helical membrane-spanning segment; it reads YLWMVILGFIIAFILAFSVGA. Residues 27-46 lie on the Cytoplasmic side of the membrane; that stretch reads NDVANSFGTAVGSGVVTLRQ. A helical membrane pass occupies residues 47–67; sequence ACILASIFETTGSVLLGAKVG. Over 68 to 86 the chain is Extracellular; it reads ETIRKGIIDVNLYNETVET. N-linked (GlcNAc...) asparagine glycosylation is present at N81. A helical transmembrane segment spans residues 87 to 107; it reads LMAGEVSAMVGSAVWQLIASF. Over 108 to 109 the chain is Cytoplasmic; the sequence is LR. A helical membrane pass occupies residues 110 to 130; the sequence is LPISGTHCIVGSTIGFSLVAI. Over 131–142 the chain is Extracellular; sequence GTKGVQWMELVK. A helical transmembrane segment spans residues 143–163; that stretch reads IVASWFISPLLSGFMSGLLFV. At 164–190 the chain is on the cytoplasmic side; sequence LIRIFILKKEDPVPNGLRALPVFYAAT. Residues 191 to 211 traverse the membrane as a helical segment; that stretch reads IAINVFSIMYTGAPVLGLVLP. Topologically, residues 212 to 213 are extracellular; the sequence is MW. Residues 214-234 traverse the membrane as a helical segment; that stretch reads AIALISFGVALLFAFFVWLFV. Over 235–482 the chain is Cytoplasmic; it reads CPWMRRKITG…EEKEEKDAPE (248 aa). 4 positions are modified to phosphoserine: S253, S256, S259, and S268. The disordered stretch occupies residues 273–307; it reads ELPGAKANDDSTIPLTGAAGETLGTSEGTSAGSHP. Over residues 295 to 304 the composition is skewed to polar residues; the sequence is LGTSEGTSAG. Phosphoserine occurs at positions 316 and 385. Residues 458-477 form a disordered region; it reads SELADPDQPREDPAEEEKEE. The helical transmembrane segment at 483 to 503 threads the bilayer; that stretch reads VHLLFHFLQVLTACFGSFAHG. Topologically, residues 504 to 530 are extracellular; it reads GNDVSNAIGPLVALWLIYKQGGVTQEA. A helical transmembrane segment spans residues 531–551; that stretch reads ATPVWLLFYGGVGICTGLWVW. Residues 552-571 are Cytoplasmic-facing; the sequence is GRRVIQTMGKDLTPITPSSG. A helical transmembrane segment spans residues 572–586; it reads FTIELASAFTVVIAS. Topologically, residues 587-593 are extracellular; sequence NIGLPVS. A helical membrane pass occupies residues 594-609; sequence TTHCKVGSVVAVGWIR. Residues 610-621 are Cytoplasmic-facing; sequence SRKAVDWRLFRN. A helical transmembrane segment spans residues 622 to 642; that stretch reads IFVAWFVTVPVAGLFSAAVMA. The Extracellular portion of the chain corresponds to 643–652; that stretch reads LLMYGILPYV.

This sequence belongs to the inorganic phosphate transporter (PiT) (TC 2.A.20) family. As to quaternary structure, homodimer. In terms of tissue distribution, ubiquitously expressed.

The protein localises to the cell membrane. Its subcellular location is the apical cell membrane. It carries out the reaction 2 Na(+)(out) + phosphate(out) = 2 Na(+)(in) + phosphate(in). Sodium-phosphate symporter which preferentially transports the monovalent form of phosphate with a stoichiometry of two sodium ions per phosphate ion. Plays a critical role in the determination of bone quality and strength by providing phosphate for bone mineralization. Required to maintain normal cerebrospinal fluid phosphate levels. Mediates phosphate-induced calcification of vascular smooth muscle cells (VCMCs) and can functionally compensate for loss of SLC20A1 in VCMCs. In terms of biological role, (Microbial infection) Functions as a retroviral receptor and confers human cells susceptibility to infection to amphotropic murine leukemia virus (A-MuLV), 10A1 murine leukemia virus (10A1 MLV) and some feline leukemia virus subgroup B (FeLV-B) variants. This chain is Sodium-dependent phosphate transporter 2 (SLC20A2), found in Homo sapiens (Human).